The following is a 244-amino-acid chain: MSQLDLNALNELPKVDRVLALAETNAQLETLTAEERVAWALENLPGEYVLSSSFGIQAAVSLHLVNQIRPDIPVILTDTGYLFPEAYQFIDELTDKLKLNLKVYRAGESPAWQEARYGKLWEQGVEGIEKYNEINKVEPMNRALKELNAQTWFAGLRREQSGSRAHLPVLAIQRGVFKVLPIIDWDNRTVYQYLQKHGLKYHPLWDQGYLSVGDTHTTRKWEPGMAEEETRFFGLKRECGLHEG.

The Nucleophile; cysteine thiosulfonate intermediate role is filled by Cys239.

Belongs to the PAPS reductase family. CysH subfamily.

It localises to the cytoplasm. It catalyses the reaction [thioredoxin]-disulfide + sulfite + adenosine 3',5'-bisphosphate + 2 H(+) = [thioredoxin]-dithiol + 3'-phosphoadenylyl sulfate. Its pathway is sulfur metabolism; hydrogen sulfide biosynthesis; sulfite from sulfate: step 3/3. Catalyzes the formation of sulfite from phosphoadenosine 5'-phosphosulfate (PAPS) using thioredoxin as an electron donor. The protein is Phosphoadenosine 5'-phosphosulfate reductase of Salmonella paratyphi A (strain AKU_12601).